The following is a 658-amino-acid chain: Palmitoyltransferase ZDHHC5-B (658 aa).

Topologically, residues 1–24 (MPVGLSVGGALGDPSPSRPFRPSR) are cytoplasmic. The chain crosses the membrane as a helical span at residues 25–45 (YVPVSAATAFLVGATTLFLCF). Residues 46–56 (TCPWLSEKFSS) lie on the Extracellular side of the membrane. The chain crosses the membrane as a helical span at residues 57-77 (FIPLYNVVVFLFTLANFCMAT). Over 78–159 (FMDPGVFPRA…NCIGRRNYRY (82 aa)) the chain is Cytoplasmic. Positions 115 to 165 (KWCSTCRFYRPPRCSHCSVCDNCVEEFDHHCPWVNNCIGRRNYRYFFLFLL) constitute a DHHC domain. Cys145 (S-palmitoyl cysteine intermediate) is an active-site residue. The chain crosses the membrane as a helical span at residues 160–180 (FFLFLLSLTVHIMDVFGFSLL). Over 181-202 (YILHHTKQLDLVQSGVTMAVMC) the chain is Extracellular. Residues 203–223 (VAGLFFVPVAGLTGFHVVLVA) form a helical membrane-spanning segment. Residues 224–658 (RGRTTNEQVT…VGGTTYEISV (435 aa)) lie on the Cytoplasmic side of the membrane. Disordered stretches follow at residues 306 to 419 (EIME…RSGS), 490 to 522 (ESLLTPSESPEFESAAHELSPPRPHPPHSLSTA), and 540 to 658 (QREG…EISV). The span at 360–398 (PGKNHTASTHSSKMSRGNSMTESPSVPVTTGQPSYRSDP) shows a compositional bias: polar residues. Residues 407–419 (GCRGGAEGGRSGS) are compositionally biased toward gly residues. A compositionally biased stretch (pro residues) spans 565 to 575 (SSPPSRAPPLS). Positions 619 to 633 (SMPNSTIKQNVANHN) are enriched in polar residues. Residues 634–644 (THSHKPARGVK) show a composition bias toward basic residues.

Belongs to the DHHC palmitoyltransferase family. ERF2/ZDHHC9 subfamily.

The protein localises to the cell membrane. It carries out the reaction L-cysteinyl-[protein] + hexadecanoyl-CoA = S-hexadecanoyl-L-cysteinyl-[protein] + CoA. Palmitoyltransferase that catalyzes the addition of palmitate onto various protein substrates and is involved in a variety of cellular processes. The chain is Palmitoyltransferase ZDHHC5-B from Danio rerio (Zebrafish).